Here is a 303-residue protein sequence, read N- to C-terminus: Recombination-associated protein RdgC (303 aa).

The protein belongs to the RdgC family.

Its subcellular location is the cytoplasm. The protein localises to the nucleoid. In terms of biological role, may be involved in recombination. The polypeptide is Recombination-associated protein RdgC (Salmonella agona (strain SL483)).